Here is a 193-residue protein sequence, read N- to C-terminus: Thymidine kinase (193 aa).

ATP contacts are provided by residues Ala-9–Ser-16 and Asp-87–Gln-90. The active-site Proton acceptor is the Glu-88. Cys-145, Cys-147, Cys-182, and His-185 together coordinate Zn(2+).

Belongs to the thymidine kinase family. As to quaternary structure, homotetramer.

It is found in the cytoplasm. The enzyme catalyses thymidine + ATP = dTMP + ADP + H(+). This chain is Thymidine kinase, found in Zymomonas mobilis subsp. mobilis (strain ATCC 31821 / ZM4 / CP4).